Reading from the N-terminus, the 427-residue chain is NAD kinase 2, mitochondrial (427 aa).

Residues 1–33 constitute a mitochondrion transit peptide; sequence MSLCLRLLCSVCGAAALRVPLGVSSLRALSGSA.

Belongs to the NAD kinase family. Homodimer.

Its subcellular location is the mitochondrion. It carries out the reaction NAD(+) + ATP = ADP + NADP(+) + H(+). Its function is as follows. Mitochondrial NAD(+) kinase that phosphorylates NAD(+) to yield NADP(+). Can use both ATP or inorganic polyphosphate as the phosphoryl donor. The chain is NAD kinase 2, mitochondrial (nadk2) from Xenopus tropicalis (Western clawed frog).